Consider the following 1284-residue polypeptide: Neurexin-4 (1284 aa).

An N-terminal signal peptide occupies residues 1-35 (MRPPRSNTKAAFSSLQFGLLCLLLLVNNGIKSVQA). Topologically, residues 36–1217 (DAFTDYFSDY…LRKAYNEVDS (1182 aa)) are extracellular. Positions 47–185 (CNQPLMERAV…ISMRVELYGC (139 aa)) constitute an F5/8 type C domain. A disulfide bridge links C47 with C185. Residues N195, N329, N340, and N398 are each glycosylated (N-linked (GlcNAc...) asparagine). One can recognise a Laminin G-like 1 domain in the interval 220–369 (FKTAFANGVM…FTRVNTIYAC (150 aa)). An intrachain disulfide couples C333 to C369. One can recognise a Laminin G-like 2 domain in the interval 403–540 (FRTYEETGVM…CGDDVVVDAC (138 aa)). 4 cysteine pairs are disulfide-bonded: C507–C540, C546–C557, C551–C566, and C568–C578. The EGF-like 1 domain maps to 542–579 (MIDRCNPNPCQHKGLCHQNSREFFCDCGHTGYAGAVCH). N668 carries N-linked (GlcNAc...) asparagine glycosylation. The Laminin G-like 3 domain occupies 824 to 962 (FRTTQENSVI…RGLYGISTGC (139 aa)). 4 cysteine pairs are disulfide-bonded: C934/C962, C966/C977, C971/C986, and C988/C998. The 38-residue stretch at 962–999 (CVGRCESNPCLNNGTCIERYDGYSCDCRWSAFKGPICA) folds into the EGF-like 2 domain. A glycan (N-linked (GlcNAc...) asparagine) is linked at N974. Residues 1032-1183 (FTTTIPKGFL…LGTQLTEDFC (152 aa)) enclose the Laminin G-like 4 domain. N1047 and N1137 each carry an N-linked (GlcNAc...) asparagine glycan. Cysteines 1147 and 1183 form a disulfide. Residues 1218–1238 (VLLACLLVILFLLLILMFFLI) traverse the membrane as a helical segment. Over 1239–1284 (GRYLHRHKGDYLTHEDQGADGADDPDDAVLHSTTGHQVRKRTEIFI) the chain is Cytoplasmic.

The protein belongs to the neurexin family. As to quaternary structure, forms a complex with Nrg and Cont. Forms a complex composed of septa junction proteins Nrx-IV/Nrx, Tsf2/MTf, Cont and Nrg during late embryogenesis. The C-terminal region interacts with coracle. Interacts with Patj in cis form. In terms of tissue distribution, found in septate junctions of epithelial and glial cells.

Its subcellular location is the cell membrane. It is found in the cell junction. The protein localises to the septate junction. Its function is as follows. Seems to play a role in the formation and function of septate junctions. Septate junctions, which are the equivalent of vertebrates tight junctions, are characterized by regular arrays of transverse structures that span the intermembrane space and form a physical barrier to diffusion. Required for the blood-brain barrier formation. The protein is Neurexin-4 (Nrx-IV) of Drosophila melanogaster (Fruit fly).